We begin with the raw amino-acid sequence, 313 residues long: Ribosomal RNA small subunit methyltransferase H (313 aa).

S-adenosyl-L-methionine is bound by residues 35–37 (GGH), Asp55, Phe79, Asp100, and Gln107.

The protein belongs to the methyltransferase superfamily. RsmH family.

The protein resides in the cytoplasm. The enzyme catalyses cytidine(1402) in 16S rRNA + S-adenosyl-L-methionine = N(4)-methylcytidine(1402) in 16S rRNA + S-adenosyl-L-homocysteine + H(+). Its function is as follows. Specifically methylates the N4 position of cytidine in position 1402 (C1402) of 16S rRNA. The polypeptide is Ribosomal RNA small subunit methyltransferase H (Burkholderia ambifaria (strain MC40-6)).